A 90-amino-acid polypeptide reads, in one-letter code: UPF0367 protein Npun_R4552 (90 aa).

Belongs to the UPF0367 family.

The chain is UPF0367 protein Npun_R4552 from Nostoc punctiforme (strain ATCC 29133 / PCC 73102).